Consider the following 968-residue polypeptide: Serine/threonine-protein kinase 10 (968 aa).

Phosphoserine is present on residues Ser-13 and Ser-20. Positions 36–294 (WEIVGELGDG…AAQLLEHPFV (259 aa)) constitute a Protein kinase domain. ATP-binding positions include 42 to 50 (LGDGAFGKV) and Lys-65. Asp-157 serves as the catalytic Proton acceptor. Residues 175–224 (DFGVSAKNLKTLQKRDSFIGTPYWMAPEVVMCETMKDTPYDYKADIWSLG) are activation segment. Residue Ser-191 is modified to Phosphoserine. Composition is skewed to polar residues over residues 337 to 351 (LENHTQNSSEVSPPS) and 361 to 393 (SPSTPLAPSQSQDSVNEPCSQPSGDRSLQTTSP). Disordered stretches follow at residues 337 to 411 (LENH…VPLR) and 425 to 490 (AQEK…CSSL). Phosphoserine is present on residues Ser-438, Ser-450, Ser-454, Ser-485, Ser-514, and Ser-549. Residues 441–457 (ANRSQKASQSRPNSSAL) are compositionally biased toward polar residues. The stretch at 573-947 (QKEEHRNQTQ…FFKLSEEAEC (375 aa)) forms a coiled coil. Disordered regions lie at residues 668-690 (VEKLPRQQRKESMKQKMEEHTQK), 827-865 (INGGGSAAEQREKIKQFSQQEEKRQKSERLQQQQKHENQ), 910-929 (LKEWRDKLRPRKKALEEDLN), and 944-968 (EAECPNPSTPSKAAKFFPYSSADAS). Over residues 835–865 (EQREKIKQFSQQEEKRQKSERLQQQQKHENQ) the composition is skewed to basic and acidic residues. A Phosphothreonine modification is found at Thr-952.

It belongs to the protein kinase superfamily. STE Ser/Thr protein kinase family. STE20 subfamily. Homodimer; homodimerization is required for activation segment autophosphorylation. In terms of processing, autophosphorylates following homodimerization, leading to activation of the protein. As to expression, highly expressed in rapidly proliferating tissues (spleen, placenta, and peripheral blood leukocytes). Also expressed in brain, heart, skeletal muscle, colon, thymus, kidney, liver, small intestine and lung.

The protein localises to the cell membrane. The catalysed reaction is L-seryl-[protein] + ATP = O-phospho-L-seryl-[protein] + ADP + H(+). It carries out the reaction L-threonyl-[protein] + ATP = O-phospho-L-threonyl-[protein] + ADP + H(+). With respect to regulation, inhibited by the pyrrole-indolinone inhibitor SU11274 (K00593): intercalates between the ATP-binding Lys-65 and alpha-C glutamate (Glu-81), resulting in a partial disordering of the lysine side chain. Also specifically inhibited by erlotinib. Slightly inhibited by gefitinib. Functionally, serine/threonine-protein kinase involved in regulation of lymphocyte migration. Phosphorylates MSN, and possibly PLK1. Involved in regulation of lymphocyte migration by mediating phosphorylation of ERM proteins such as MSN. Acts as a negative regulator of MAP3K1/MEKK1. May also act as a cell cycle regulator by acting as a polo kinase kinase: mediates phosphorylation of PLK1 in vitro; however such data require additional evidences in vivo. The protein is Serine/threonine-protein kinase 10 (STK10) of Homo sapiens (Human).